We begin with the raw amino-acid sequence, 113 residues long: Hydrogenase maturation factor HypA (113 aa).

Ni(2+) is bound at residue H2. Residues C73, C76, C89, and C92 each contribute to the Zn(2+) site.

Belongs to the HypA/HybF family.

In terms of biological role, involved in the maturation of [NiFe] hydrogenases. Required for nickel insertion into the metal center of the hydrogenase. The polypeptide is Hydrogenase maturation factor HypA (Aeromonas hydrophila subsp. hydrophila (strain ATCC 7966 / DSM 30187 / BCRC 13018 / CCUG 14551 / JCM 1027 / KCTC 2358 / NCIMB 9240 / NCTC 8049)).